A 497-amino-acid chain; its full sequence is Tryptophan decarboxylase 2 (497 aa).

Residues A162, S163, T257, and N311 each coordinate pyridoxal 5'-phosphate. K314 bears the N6-(pyridoxal phosphate)lysine mark.

The protein belongs to the group II decarboxylase family. Requires pyridoxal 5'-phosphate as cofactor.

The catalysed reaction is L-tryptophan + H(+) = tryptamine + CO2. In terms of biological role, involved in serotonin biosynthesis. Catalyzes the decarboxylation of L-tryptophan to tryptamine, which is converted to serotonin by tryptamine 5-hydroxylase. May play a minor role in serotonin biosynthetis during senescence. Accumulation of serotonin attenuates leaf senescence. This is Tryptophan decarboxylase 2 from Oryza sativa subsp. japonica (Rice).